The primary structure comprises 78 residues: Consomatin Te1 (78 aa).

The N-terminal stretch at 1–22 (MQTAYWMMVMMMVWITAPLSEG) is a signal peptide. Residues 23–56 (GQLNDVIRGLVPDNLAPQLVLQSLDSRRHPHGIR) constitute a propeptide that is removed on maturation. Residues C63 and C68 are joined by a disulfide bond. W65 is modified (D-tryptophan). Residues P69, P70, and P72 each carry the 4-hydroxyproline modification. Residues 74 to 78 (RRLGS) constitute a propeptide that is removed on maturation.

It belongs to the conotoxin C superfamily. Consomatin family. In terms of tissue distribution, expressed by the venom duct.

It localises to the secreted. Its function is as follows. Moderately activates human somatostatin receptors (SSTR) with a preferential activation of SSTR1 and SSTR4. In vivo, does not cause behavioral changes in mice within a few minutes of intracranial injection, but causes a progressive loss of movement thereafter. Four to five hours after injection, mice recover, even with the highest dose tested. Shows antinociception and antihyperalgesia activities in two mouse models of acute pain, most probably by acting outside the central nervous system. The sequence is that of Consomatin Te1 from Conus terebra (Sea snail).